We begin with the raw amino-acid sequence, 398 residues long: 1-deoxy-D-xylulose 5-phosphate reductoisomerase (398 aa).

7 residues coordinate NADPH: T28, G29, S30, I31, G54, N57, and N135. K136 lines the 1-deoxy-D-xylulose 5-phosphate pocket. E137 provides a ligand contact to NADPH. Mn(2+) is bound at residue D159. 1-deoxy-D-xylulose 5-phosphate-binding residues include S160, E161, S185, and H208. Position 161 (E161) interacts with Mn(2+). G214 contacts NADPH. Positions 221, 226, 227, and 230 each coordinate 1-deoxy-D-xylulose 5-phosphate. E230 contacts Mn(2+).

The protein belongs to the DXR family. Mg(2+) is required as a cofactor. Mn(2+) serves as cofactor.

The enzyme catalyses 2-C-methyl-D-erythritol 4-phosphate + NADP(+) = 1-deoxy-D-xylulose 5-phosphate + NADPH + H(+). It functions in the pathway isoprenoid biosynthesis; isopentenyl diphosphate biosynthesis via DXP pathway; isopentenyl diphosphate from 1-deoxy-D-xylulose 5-phosphate: step 1/6. Catalyzes the NADPH-dependent rearrangement and reduction of 1-deoxy-D-xylulose-5-phosphate (DXP) to 2-C-methyl-D-erythritol 4-phosphate (MEP). This chain is 1-deoxy-D-xylulose 5-phosphate reductoisomerase, found in Rhodococcus jostii (strain RHA1).